The chain runs to 436 residues: ABC transporter permease YtrF (436 aa).

A signal peptide spans 1–31 (MRFKDQVHFIRRNMKKNRLRVFMTILATTMA). Cysteine 32 carries N-palmitoyl cysteine lipidation. Residue cysteine 32 is the site of S-diacylglycerol cysteine attachment. Residues 115–165 (NMNDELKANMELEKGRVAKSENEIVVGYDFAKRLLTKKESEEYNKKIEEAK) are a coiled coil. 3 consecutive transmembrane segments (helical) span residues 293 to 313 (FKIG…IGIF), 350 to 370 (YIGI…SYLV), and 396 to 416 (IPAS…VISG).

The protein belongs to the ABC-4 integral membrane protein family. As to quaternary structure, the complex is composed of 2 ATP-binding proteins (YtrB and YtrE), 2 transmembrane proteins (YtrC and YtrD) and a solute-binding protein (YtrF).

The protein localises to the cell membrane. Part of the ABC transporter complex YtrBCDEF that plays a role in acetoin utilization during stationary phase and sporulation. The protein is ABC transporter permease YtrF (ytrF) of Bacillus subtilis (strain 168).